The primary structure comprises 100 residues: Urease subunit gamma (100 aa).

It belongs to the urease gamma subunit family. Heterotrimer of UreA (gamma), UreB (beta) and UreC (alpha) subunits. Three heterotrimers associate to form the active enzyme.

The protein resides in the cytoplasm. It carries out the reaction urea + 2 H2O + H(+) = hydrogencarbonate + 2 NH4(+). The protein operates within nitrogen metabolism; urea degradation; CO(2) and NH(3) from urea (urease route): step 1/1. In Pseudomonas entomophila (strain L48), this protein is Urease subunit gamma.